Consider the following 926-residue polypeptide: Serine/threonine-protein kinase SIK2 (926 aa).

The region spanning 20–271 (YDIEGTLGKG…IAQIKEHKWM (252 aa)) is the Protein kinase domain. Thr25 is modified (phosphothreonine). ATP is bound by residues 26–34 (LGKGNFAVV) and Lys49. At Lys53 the chain carries N6-acetyllysine; by EP300. Asp142 serves as the catalytic Proton acceptor. A Phosphothreonine; by LKB1 modification is found at Thr175. The region spanning 295–335 (EFNEQVLRLMHSLGIDQQKTIESLQNKSYNHFAAIYFLLVE) is the UBA domain. Thr484 is modified (phosphothreonine). Phosphoserine is present on residues Ser534 and Ser587. Low complexity-rich tracts occupy residues 644 to 659 (SSCP…ESVS) and 742 to 756 (SSYP…LPRQ). Disordered regions lie at residues 644 to 666 (SSCP…ASVH), 742 to 776 (SSYP…PLSP), and 801 to 896 (PLPS…SSYD). The segment covering 765–774 (APPFSLTQPL) has biased composition (polar residues). A compositionally biased stretch (pro residues) spans 822-834 (QPPPPPPPPPPRQ).

Belongs to the protein kinase superfamily. CAMK Ser/Thr protein kinase family. SNF1 subfamily. Interacts with and phosphorylates TORC2/CRTC2. Requires Mg(2+) as cofactor. Post-translationally, phosphorylated at Thr-175 by STK11/LKB1 in complex with STE20-related adapter-alpha (STRADA) pseudo kinase and CAB39. Phosphorylated at Thr-484 in response to insulin in adipocytes. Acetylation at Lys-53 inhibits kinase activity. Deacetylated by HDAC6.

It localises to the cytoplasm. Its subcellular location is the endoplasmic reticulum membrane. The catalysed reaction is L-seryl-[protein] + ATP = O-phospho-L-seryl-[protein] + ADP + H(+). The enzyme catalyses L-threonyl-[protein] + ATP = O-phospho-L-threonyl-[protein] + ADP + H(+). Its activity is regulated as follows. Activated by phosphorylation on Thr-175. In terms of biological role, serine/threonine-protein kinase that plays a role in many biological processes such as fatty acid oxidation, autophagy, immune response or glucose metabolism. Phosphorylates 'Ser-794' of IRS1 in insulin-stimulated adipocytes, potentially modulating the efficiency of insulin signal transduction. Inhibits CREB activity by phosphorylating and repressing TORCs, the CREB-specific coactivators. Phosphorylates EP300 and thus inhibits its histone acetyltransferase activity. In turn, regulates the DNA-binding ability of several transcription factors such as PPARA or MLXIPL. Also plays a role in thymic T-cell development. This is Serine/threonine-protein kinase SIK2 (SIK2) from Homo sapiens (Human).